Here is a 410-residue protein sequence, read N- to C-terminus: Metal tolerance protein 3 (410 aa).

The segment at 1 to 58 (MDGDDRRTPLLGGEGGSTRPPSLRRRDSARSLRSTFLSRLPDKVRGGGDPERPAADVD) is disordered. Residues 1–114 (MDGDDRRTPL…EDKEQKQSES (114 aa)) lie on the Cytoplasmic side of the membrane. Residues 40-58 (LPDKVRGGGDPERPAADVD) show a composition bias toward basic and acidic residues. Residues 115-135 (AMKISNYANIILLVFKVYATI) traverse the membrane as a helical segment. At 136–140 (KTGSM) the chain is on the vacuolar side. The chain crosses the membrane as a helical span at residues 141–161 (AIAASTLDSLLDFLAGGILYF). The Cytoplasmic portion of the chain corresponds to 162–184 (THLTMKSVNIYKYPIGKLRVQPV). The chain crosses the membrane as a helical span at residues 185 to 205 (GIIVFAAIMATLGFQVLIQAI). Residues 206–221 (EQLVENKAGEKMTPEQ) lie on the Vacuolar side of the membrane. A helical transmembrane segment spans residues 222–242 (LIWLYSIMLSATVVKLALYIY). The Cytoplasmic segment spans residues 243 to 258 (CRSSGNSIVQAYAKDH). Residues 259-275 (YFDVVTNVVGLVAAVLG) traverse the membrane as a helical segment. The Vacuolar segment spans residues 276–284 (DKFFWWIDP). The chain crosses the membrane as a helical span at residues 285–303 (VGAVLLAVYTIVNWSGTVY). Topologically, residues 304-410 (ENAVTLVGQC…VRSRLPSTEP (107 aa)) are cytoplasmic.

Belongs to the cation diffusion facilitator (CDF) transporter (TC 2.A.4) family. SLC30A subfamily.

The protein resides in the vacuole membrane. Involved in sequestration of excess metal in the cytoplasm into vacuoles to maintain metal homeostasis. The protein is Metal tolerance protein 3 (MTP3) of Oryza sativa subsp. japonica (Rice).